The chain runs to 60 residues: Putative mercuric resistance protein (60 aa).

The sequence is that of Putative mercuric resistance protein from Shigella flexneri.